The chain runs to 505 residues: Lysine--tRNA ligase (505 aa).

Residues glutamate 415 and glutamate 422 each contribute to the Mg(2+) site.

This sequence belongs to the class-II aminoacyl-tRNA synthetase family. In terms of assembly, homodimer. Mg(2+) serves as cofactor.

The protein localises to the cytoplasm. The catalysed reaction is tRNA(Lys) + L-lysine + ATP = L-lysyl-tRNA(Lys) + AMP + diphosphate. The sequence is that of Lysine--tRNA ligase from Salmonella typhi.